The primary structure comprises 373 residues: Alanine racemase (373 aa).

Lys-40 acts as the Proton acceptor; specific for D-alanine in catalysis. Lys-40 bears the N6-(pyridoxal phosphate)lysine mark. Arg-140 is a binding site for substrate. The Proton acceptor; specific for L-alanine role is filled by Tyr-268. Position 315 (Met-315) interacts with substrate.

It belongs to the alanine racemase family. Pyridoxal 5'-phosphate serves as cofactor.

It carries out the reaction L-alanine = D-alanine. Its pathway is amino-acid biosynthesis; D-alanine biosynthesis; D-alanine from L-alanine: step 1/1. Catalyzes the interconversion of L-alanine and D-alanine. May also act on other amino acids. In Levilactobacillus brevis (strain ATCC 367 / BCRC 12310 / CIP 105137 / JCM 1170 / LMG 11437 / NCIMB 947 / NCTC 947) (Lactobacillus brevis), this protein is Alanine racemase (alr).